The chain runs to 640 residues: Threonine--tRNA ligase (640 aa).

The region spanning 1–59 (MKIKVKLPDGKEKEYDRGITPAEIAKELGIKKAIGAVVNGELWDLKRPIENDCELRLVT) is the TGS domain. The segment at 240-531 (DHRKLGPQLE…LIEHFAGAFP (292 aa)) is catalytic. Cys-332, His-383, and His-508 together coordinate Zn(2+).

This sequence belongs to the class-II aminoacyl-tRNA synthetase family. In terms of assembly, homodimer. Zn(2+) is required as a cofactor.

Its subcellular location is the cytoplasm. The catalysed reaction is tRNA(Thr) + L-threonine + ATP = L-threonyl-tRNA(Thr) + AMP + diphosphate + H(+). In terms of biological role, catalyzes the attachment of threonine to tRNA(Thr) in a two-step reaction: L-threonine is first activated by ATP to form Thr-AMP and then transferred to the acceptor end of tRNA(Thr). Also edits incorrectly charged L-seryl-tRNA(Thr). The polypeptide is Threonine--tRNA ligase (Thermotoga maritima (strain ATCC 43589 / DSM 3109 / JCM 10099 / NBRC 100826 / MSB8)).